The sequence spans 556 residues: 2-isopropylmalate synthase (556 aa).

The Pyruvate carboxyltransferase domain occupies 33–307 (PIWCSSDLRD…NPELDFSDID (275 aa)). Mg(2+)-binding residues include Asp-42, His-246, His-248, and Asn-282. The tract at residues 439–556 (ANTPYALISH…SLSQAQAKAA (118 aa)) is regulatory domain.

The protein belongs to the alpha-IPM synthase/homocitrate synthase family. LeuA type 2 subfamily. Homodimer. It depends on Mg(2+) as a cofactor.

Its subcellular location is the cytoplasm. It catalyses the reaction 3-methyl-2-oxobutanoate + acetyl-CoA + H2O = (2S)-2-isopropylmalate + CoA + H(+). It participates in amino-acid biosynthesis; L-leucine biosynthesis; L-leucine from 3-methyl-2-oxobutanoate: step 1/4. Functionally, catalyzes the condensation of the acetyl group of acetyl-CoA with 3-methyl-2-oxobutanoate (2-ketoisovalerate) to form 3-carboxy-3-hydroxy-4-methylpentanoate (2-isopropylmalate). The sequence is that of 2-isopropylmalate synthase from Pseudomonas syringae pv. tomato (strain ATCC BAA-871 / DC3000).